Consider the following 93-residue polypeptide: UPF0358 protein ABC2396 (93 aa).

The protein belongs to the UPF0358 family.

The sequence is that of UPF0358 protein ABC2396 from Shouchella clausii (strain KSM-K16) (Alkalihalobacillus clausii).